We begin with the raw amino-acid sequence, 156 residues long: ATP synthase subunit b (156 aa).

A helical transmembrane segment spans residues 7–27 (LFVQAIVFAILVWFTMKFVWP).

The protein belongs to the ATPase B chain family. In terms of assembly, F-type ATPases have 2 components, F(1) - the catalytic core - and F(0) - the membrane proton channel. F(1) has five subunits: alpha(3), beta(3), gamma(1), delta(1), epsilon(1). F(0) has three main subunits: a(1), b(2) and c(10-14). The alpha and beta chains form an alternating ring which encloses part of the gamma chain. F(1) is attached to F(0) by a central stalk formed by the gamma and epsilon chains, while a peripheral stalk is formed by the delta and b chains.

Its subcellular location is the cell inner membrane. Functionally, f(1)F(0) ATP synthase produces ATP from ADP in the presence of a proton or sodium gradient. F-type ATPases consist of two structural domains, F(1) containing the extramembraneous catalytic core and F(0) containing the membrane proton channel, linked together by a central stalk and a peripheral stalk. During catalysis, ATP synthesis in the catalytic domain of F(1) is coupled via a rotary mechanism of the central stalk subunits to proton translocation. Component of the F(0) channel, it forms part of the peripheral stalk, linking F(1) to F(0). This Polaromonas sp. (strain JS666 / ATCC BAA-500) protein is ATP synthase subunit b.